The chain runs to 619 residues: ESX-2 secretion system protein EccA2 (619 aa).

Residue 373-380 participates in ATP binding; the sequence is GPPGTGKT.

The protein belongs to the CbxX/CfxQ family. Part of the ESX-2 / type VII secretion system (T7SS), which is composed of cytosolic and membrane components. Residues 522-619 interact with an artificial EsxB-EsxA heterodimer from the adjacent ESX-1 locus.

The protein localises to the cytoplasm. Functionally, shows ATPase activity. Could provide energy for export of ESX-2 substrates. In Mycobacterium tuberculosis (strain ATCC 25618 / H37Rv), this protein is ESX-2 secretion system protein EccA2 (eccA2).